Consider the following 209-residue polypeptide: MLGLIGKKVGMTQVFQGNGVVVPVTVIEFEPNYIIGKKTVERDGYDALIMGSVDLKSSKISKPIKGQYKNLENVEPKKYVIEFKGLKGYDAGDEVGLDAFKEIKYVDITGTTKGKGFQGAMKRHNFSGGPSSHGSKFHRHLGSTGQAATPSRTFKGTKMAGRMGGEQQTIQNLEVVFIDEEKRAILVKGAVPGVKGSFVIVKKAKKVGV.

The tract at residues 127-152 (SGGPSSHGSKFHRHLGSTGQAATPSR) is disordered. Polar residues predominate over residues 143 to 152 (STGQAATPSR).

It belongs to the universal ribosomal protein uL3 family. In terms of assembly, part of the 50S ribosomal subunit. Forms a cluster with proteins L14 and L19.

Functionally, one of the primary rRNA binding proteins, it binds directly near the 3'-end of the 23S rRNA, where it nucleates assembly of the 50S subunit. This is Large ribosomal subunit protein uL3 from Borrelia hermsii (strain HS1 / DAH).